We begin with the raw amino-acid sequence, 444 residues long: Protein EVI2B (444 aa).

A signal peptide spans methionine 1–threonine 23. Topologically, residues glutamate 24–alanine 203 are extracellular. N-linked (GlcNAc...) asparagine glycans are attached at residues asparagine 63, asparagine 94, asparagine 104, and asparagine 127. Polar residues-rich tracts occupy residues asparagine 104–glutamine 131 and threonine 160–isoleucine 171. The segment at asparagine 104 to histidine 197 is disordered. Pro residues predominate over residues threonine 177–serine 187. Residues isoleucine 204–isoleucine 224 traverse the membrane as a helical segment. Topologically, residues leucine 225–leucine 444 are cytoplasmic. Threonine 250 bears the Phosphothreonine mark. 4 positions are modified to phosphoserine: serine 269, serine 272, serine 279, and serine 295. Polar residues-rich tracts occupy residues serine 318–serine 332 and serine 361–proline 370. Disordered stretches follow at residues serine 318 to aspartate 337 and serine 361 to leucine 444.

In terms of tissue distribution, expressed in myeloid and lymphoid progenitors and increased in mature hematopoietic populations with the highest levels in granulocytes.

Its subcellular location is the membrane. Functionally, required for granulocyte differentiation and functionality of hematopoietic progenitor cells through the control of cell cycle progression and survival of hematopoietic progenitor cells. The polypeptide is Protein EVI2B (Mus musculus (Mouse)).